Consider the following 350-residue polypeptide: Small ribosomal subunit biogenesis GTPase RsgA (350 aa).

Over residues 1-17 (MSKNKLSKGQQRRVNAN) the composition is skewed to polar residues. The interval 1–33 (MSKNKLSKGQQRRVNANHQRRLKTSKEKPDYDD) is disordered. Residues 104 to 273 (TSVLTRPDFY…VIDSPGVREF (170 aa)) enclose the CP-type G domain. GTP is bound by residues 160–163 (NKID) and 214–222 (GQSGVGKSS). Zn(2+) contacts are provided by Cys-297, Cys-302, His-304, and Cys-310.

Belongs to the TRAFAC class YlqF/YawG GTPase family. RsgA subfamily. Monomer. Associates with 30S ribosomal subunit, binds 16S rRNA. Zn(2+) is required as a cofactor.

The protein resides in the cytoplasm. One of several proteins that assist in the late maturation steps of the functional core of the 30S ribosomal subunit. Helps release RbfA from mature subunits. May play a role in the assembly of ribosomal proteins into the subunit. Circularly permuted GTPase that catalyzes slow GTP hydrolysis, GTPase activity is stimulated by the 30S ribosomal subunit. The sequence is that of Small ribosomal subunit biogenesis GTPase RsgA from Escherichia coli (strain ATCC 8739 / DSM 1576 / NBRC 3972 / NCIMB 8545 / WDCM 00012 / Crooks).